Here is a 922-residue protein sequence, read N- to C-terminus: Chaperone protein ClpC, chloroplastic (922 aa).

Residues 1-72 constitute a chloroplast transit peptide; it reads MARVLAQSLS…RPGLDFHSKV (72 aa). The Clp R domain occupies 92–234; it reads FERFTEKAIK…RTQVIRMVGE (143 aa). Repeat stretches follow at residues 95–160 and 170–234; these read FTEK…IGRG and FTPR…MVGE. The segment at 255–502 is i; the sequence is LEEYGTNLTK…RVRLQHAQLP (248 aa). 300–307 is a binding site for ATP; sequence GEPGVGKT. The UVR domain maps to 509-544; the sequence is DKEVRKIVKEKEEYVRNQDFEKAGELRDKEMDLKAQ. Residues 569 to 760 are II; that stretch reads VTEVDIQHIV…LLIMTSNVGS (192 aa). 643-650 contributes to the ATP binding site; it reads GPTGVGKS.

It belongs to the ClpA/ClpB family. ClpC subfamily.

It localises to the plastid. Its subcellular location is the chloroplast. Its function is as follows. Molecular chaperone that may interact with a ClpP-like protease involved in degradation of denatured proteins in the chloroplast. In Pisum sativum (Garden pea), this protein is Chaperone protein ClpC, chloroplastic.